The chain runs to 287 residues: Formamidopyrimidine-DNA glycosylase (287 aa).

The active-site Schiff-base intermediate with DNA is the Pro-2. Glu-3 serves as the catalytic Proton donor. The Proton donor; for beta-elimination activity role is filled by Lys-60. Residues His-100 and Arg-119 each coordinate DNA. The segment at 249–283 adopts an FPG-type zinc-finger fold; that stretch reads QVYGREGEPCRHCGTVIAKIKLGGRSAHFCPQCQP. Arg-273 (proton donor; for delta-elimination activity) is an active-site residue.

This sequence belongs to the FPG family. Monomer. It depends on Zn(2+) as a cofactor.

It catalyses the reaction Hydrolysis of DNA containing ring-opened 7-methylguanine residues, releasing 2,6-diamino-4-hydroxy-5-(N-methyl)formamidopyrimidine.. It carries out the reaction 2'-deoxyribonucleotide-(2'-deoxyribose 5'-phosphate)-2'-deoxyribonucleotide-DNA = a 3'-end 2'-deoxyribonucleotide-(2,3-dehydro-2,3-deoxyribose 5'-phosphate)-DNA + a 5'-end 5'-phospho-2'-deoxyribonucleoside-DNA + H(+). In terms of biological role, involved in base excision repair of DNA damaged by oxidation or by mutagenic agents. Acts as a DNA glycosylase that recognizes and removes damaged bases. Has a preference for oxidized purines, such as 7,8-dihydro-8-oxoguanine (8-oxoG). Has AP (apurinic/apyrimidinic) lyase activity and introduces nicks in the DNA strand. Cleaves the DNA backbone by beta-delta elimination to generate a single-strand break at the site of the removed base with both 3'- and 5'-phosphates. This chain is Formamidopyrimidine-DNA glycosylase (mutM), found in Synechocystis sp. (strain ATCC 27184 / PCC 6803 / Kazusa).